A 105-amino-acid polypeptide reads, in one-letter code: MQMIRAIIRPGMETKVIECLEKEGCISLTKMEVFGRGKQKGIHIADISYDELQKTMLLMVVEDEHKDRAIKTIMESARTGKYGDGRIFVTPVEEAYTIRTGKPGL.

It belongs to the P(II) protein family.

Its function is as follows. Could be involved in the regulation of nitrogen fixation. In Methanosarcina barkeri, this protein is Nitrogen fixation nifHD1 region GlnB-like protein 1 (glnBA).